Consider the following 472-residue polypeptide: Transmembrane protein 8B (472 aa).

The tract at residues methionine 1–proline 37 is disordered. Residues methionine 1–leucine 233 are Extracellular-facing. N-linked (GlcNAc...) asparagine glycans are attached at residues asparagine 92 and asparagine 100. Residues phenylalanine 182–threonine 221 enclose the EGF-like domain. 3 disulfide bridges follow: cysteine 186-cysteine 196, cysteine 190-cysteine 209, and cysteine 211-cysteine 220. A helical membrane pass occupies residues leucine 234–isoleucine 254. The Cytoplasmic segment spans residues arginine 255 to arginine 257. A helical membrane pass occupies residues tyrosine 258–alanine 277. The Extracellular portion of the chain corresponds to cysteine 278–aspartate 292. The helical transmembrane segment at valine 293–methionine 313 threads the bilayer. The Cytoplasmic segment spans residues alanine 314–arginine 315. Residues leucine 316 to leucine 336 form a helical membrane-spanning segment. At glutamine 337–glycine 342 the chain is on the extracellular side. A helical transmembrane segment spans residues leucine 343 to valine 363. Over arginine 364 to tryptophan 379 the chain is Cytoplasmic. The helical transmembrane segment at leucine 380 to valine 400 threads the bilayer. Over glutamate 401–asparagine 405 the chain is Extracellular. Residues tyrosine 406–proline 426 form a helical membrane-spanning segment. The Cytoplasmic portion of the chain corresponds to proline 427–serine 472.

Belongs to the TMEM8 family. In terms of assembly, may interact with EZR. N-glycosylated.

The protein localises to the cell membrane. It is found in the cytoplasm. The protein resides in the nucleus. Its subcellular location is the mitochondrion. It localises to the endoplasmic reticulum. Its function is as follows. May function as a regulator of the EGFR pathway. Probable tumor suppressor which may function in cell growth, proliferation and adhesion. The protein is Transmembrane protein 8B (TMEM8B) of Bos taurus (Bovine).